The following is a 536-amino-acid chain: MSSPSGGEDSKDDEKDEESNRLLPLSSSSQSQSLQSENYSDEVAFEAREKIVIVDVEGPHSIDAVDYVPPFSWRKLWLFTGPGFLMSIAFLDPGNLEGDLQAGAIAGYSLLWLLLWATVMGLLIQMLSARVGVATGRHLAELCRDEYSNWARYILWFMAEVALIGADIQEVIGSAIAIQILSNGFLPLWAGVLITASDCFMFLFLENYGVRKLEGVFAVLIATMALSFAWMCGDAKPSGKELLKGILIPRLGSKTIRQAVGVVGCVIMPHNVFLHSALVQSRKIDPQKKARVQEALTYYSIESSVALFVSFMINLFVTTVFAKGFYGTPQASSIGLVNAGQYLEEKYGGGLFPILYIWGIGLLAAGQSSTITGTYAGQFIMGGFLNLRLKKWTRALITRSFAIIPTIIVAIIFNTSEASLDILNEWLNVLQSMQIPFALIPLLTLVAKEQVMGVFKIGPVLERLAWTIAVLVILINGYLLIDFFISEVKGLLFGFLIGSGTVAYVSFIIYLVSRCGTSPSNGLSLELSERITCNGN.

Positions 1–37 (MSSPSGGEDSKDDEKDEESNRLLPLSSSSQSQSLQSE) are disordered. The segment covering 22–36 (LLPLSSSSQSQSLQS) has biased composition (low complexity). Asn38 carries an N-linked (GlcNAc...) asparagine glycan. The next 12 helical transmembrane spans lie at 76 to 96 (LWLF…PGNL), 104 to 124 (AIAG…GLLI), 161 to 181 (VALI…IQIL), 185 to 205 (FLPL…FLFL), 213 to 233 (LEGV…WMCG), 259 to 279 (AVGV…SALV), 305 to 325 (VALF…AKGF), 347 to 367 (YGGG…AAGQ), 400 to 420 (SFAI…EASL), 435 to 455 (IPFA…MGVF), 465 to 485 (AWTI…DFFI), and 492 to 512 (LFGF…IYLV).

Belongs to the NRAMP (TC 2.A.55) family.

The protein localises to the membrane. Its function is as follows. Probable divalent metal transporter. The sequence is that of Metal transporter Nramp2 from Populus trichocarpa (Western balsam poplar).